The following is a 482-amino-acid chain: Arginine/ornithine antiporter (482 aa).

At 1-10 (MSQESSQKLR) the chain is on the cytoplasmic side. The helical transmembrane segment at 11-31 (LGALTALVVGSMIGGGIFSLP) threads the bilayer. Topologically, residues 32 to 40 (QNMAASADV) are periplasmic. Residues 41–61 (GAVLIGWAITAVGMLTLAFVF) traverse the membrane as a helical segment. Topologically, residues 62 to 100 (QTLANRKPELDGGVYAYAKAGFGDYMGFSSAWGYWISAW) are cytoplasmic. The chain crosses the membrane as a helical span at residues 101–121 (LGNVGYFVLLFSTLGYFFPIF). Over 122–124 (GKG) the chain is Periplasmic. Residues 125-145 (DTVAAIVCASVLLWALHFLVL) form a helical membrane-spanning segment. At 146–156 (RGIKEAAFINT) the chain is on the cytoplasmic side. Residues 157-177 (VTTVAKVVPLFLFILICLFAF) traverse the membrane as a helical segment. The Periplasmic segment spans residues 178 to 202 (KLDIFTADIWGKSNPDLGSVMNQVR). Residues 203-223 (NMMLVTVWVFIGIEGASIFSS) traverse the membrane as a helical segment. Residues 224 to 235 (RAEKRSDVGKAT) are Cytoplasmic-facing. The chain crosses the membrane as a helical span at residues 236-256 (VIGFITVLLLLVLVNVLSMGV). Residues 257 to 283 (MTQPELAKLQNPSMALVLEHVVGHWGA) lie on the Periplasmic side of the membrane. Residues 284–304 (VLISVGLLISLLGALLSWVLL) traverse the membrane as a helical segment. At 305–333 (CAEIMFAAAKDHTMPEFLRRENANQVPAN) the chain is on the cytoplasmic side. A helical membrane pass occupies residues 334-354 (ALWLTNICVQVFLVVVFFTSG). The Periplasmic portion of the chain corresponds to 355–365 (DPDGMDPYTKM). Residues 366-386 (LLLATSMILIPYFWSAAYGLL) traverse the membrane as a helical segment. Topologically, residues 387–403 (LTLKGETYENDARERSK) are cytoplasmic. The helical transmembrane segment at 404-424 (DLVIAGIAVAYAVWLLYAGGL) threads the bilayer. Lysine 425 is a topological domain (periplasmic). A helical membrane pass occupies residues 426–446 (YLLLSALLYAPGAILFAKAKH). Residues 447 to 458 (EVGQPIFTGIEK) are Cytoplasmic-facing. Residues 459 to 479 (LIFAAVVIGALVAAYGLYDGF) traverse the membrane as a helical segment. The Periplasmic portion of the chain corresponds to 480 to 482 (LTL).

Belongs to the amino acid-polyamine-organocation (APC) superfamily. Basic amino acid/polyamine antiporter (APA) (TC 2.A.3.2) family.

The protein resides in the cell inner membrane. The catalysed reaction is L-ornithine(in) + L-arginine(out) = L-ornithine(out) + L-arginine(in). Its function is as follows. Catalyzes electroneutral exchange between arginine and ornithine to allow high-efficiency energy conversion in the arginine deiminase pathway. Also mediates the proton motive force-driven uptake of arginine and ornithine, but the exchange is several orders of magnitude faster than the proton motive force-driven transport. In Pseudomonas aeruginosa (strain ATCC 15692 / DSM 22644 / CIP 104116 / JCM 14847 / LMG 12228 / 1C / PRS 101 / PAO1), this protein is Arginine/ornithine antiporter.